Here is a 354-residue protein sequence, read N- to C-terminus: Nicotinate-nucleotide--dimethylbenzimidazole phosphoribosyltransferase (354 aa).

The active-site Proton acceptor is E322.

The protein belongs to the CobT family.

It catalyses the reaction 5,6-dimethylbenzimidazole + nicotinate beta-D-ribonucleotide = alpha-ribazole 5'-phosphate + nicotinate + H(+). The protein operates within nucleoside biosynthesis; alpha-ribazole biosynthesis; alpha-ribazole from 5,6-dimethylbenzimidazole: step 1/2. Catalyzes the synthesis of alpha-ribazole-5'-phosphate from nicotinate mononucleotide (NAMN) and 5,6-dimethylbenzimidazole (DMB). The sequence is that of Nicotinate-nucleotide--dimethylbenzimidazole phosphoribosyltransferase from Solidesulfovibrio magneticus (strain ATCC 700980 / DSM 13731 / RS-1) (Desulfovibrio magneticus).